Reading from the N-terminus, the 81-residue chain is HssA/B-like protein 5 (81 aa).

Belongs to the hssA/B family.

This chain is HssA/B-like protein 5 (hssl5), found in Dictyostelium discoideum (Social amoeba).